The following is a 446-amino-acid chain: D(3) dopamine receptor (446 aa).

Residues 1–32 (MAPLSQISSHINSTCGAENSTGVNRARPHAYY) are Extracellular-facing. 2 N-linked (GlcNAc...) asparagine glycosylation sites follow: Asn-12 and Asn-19. A helical membrane pass occupies residues 33–55 (ALSYCALILAIIFGNGLVCAAVL). Residues 56–65 (RERALQTTTN) are Cytoplasmic-facing. The helical transmembrane segment at 66 to 88 (YLVVSLAVADLLVATLVMPWVVY) threads the bilayer. The Extracellular segment spans residues 89 to 104 (LEVTGGVWNFSRICCD). N-linked (GlcNAc...) asparagine glycosylation occurs at Asn-97. Cysteines 103 and 181 form a disulfide. The chain crosses the membrane as a helical span at residues 105-126 (VFVTLDVMMCTASILNLCAISI). The Cytoplasmic segment spans residues 127 to 149 (DRYTAVVMPVHYQHGTGQSSCRR). Residues 150–170 (VALMITAVWVLAFAVSCPLLF) form a helical membrane-spanning segment. The Extracellular portion of the chain corresponds to 171–187 (GFNTTGDPSICSISNPD). Residue Asn-173 is glycosylated (N-linked (GlcNAc...) asparagine). Residues 188–209 (FVIYSSVVSFYVPFGVTVLVYA) traverse the membrane as a helical segment. Residues 210–375 (RIYMVLRQRR…VPLREKKATQ (166 aa)) are Cytoplasmic-facing. Residues 376 to 397 (MVVIVLGAFIVCWLPFFLTHVL) traverse the membrane as a helical segment. The Extracellular segment spans residues 398–412 (NTHCQACHVSPELYR). A disulfide bond links Cys-401 and Cys-404. Residues 413–432 (ATTWLGYVNSALNPVIYTTF) form a helical membrane-spanning segment. Residues 433–446 (NIEFRKAFLKILSC) lie on the Cytoplasmic side of the membrane.

It belongs to the G-protein coupled receptor 1 family. Interacts with CLIC6. Interacts with GRK4. Interacts with PALM. Interacts with FLNA (via filamin repeat 21); increases PKA-mediated phosphorylation of FLNA. In terms of processing, phosphorylated by GRK4. Palmitoylated.

Its subcellular location is the cell membrane. Dopamine receptor whose activity is mediated by G proteins which inhibit adenylyl cyclase. Promotes cell proliferation. This is D(3) dopamine receptor (Drd3) from Mus musculus (Mouse).